The primary structure comprises 236 residues: Small ribosomal subunit protein uS3 (236 aa).

Residues Leu-38–Lys-106 form the KH type-2 domain. Positions Asp-211–Gly-236 are disordered.

The protein belongs to the universal ribosomal protein uS3 family. Part of the 30S ribosomal subunit. Forms a tight complex with proteins S10 and S14.

Its function is as follows. Binds the lower part of the 30S subunit head. Binds mRNA in the 70S ribosome, positioning it for translation. The polypeptide is Small ribosomal subunit protein uS3 (Salinibacter ruber (strain DSM 13855 / M31)).